Here is a 158-residue protein sequence, read N- to C-terminus: uncharacterized protein (158 aa).

The first 30 residues, 1 to 30 (MNKKFLKCGTLFLISCSILGSTIPAVTVFS), serve as a signal peptide directing secretion.

This is an uncharacterized protein from Streptococcus pneumoniae serotype 2 (strain D39 / NCTC 7466).